The sequence spans 58 residues: Putative antitoxin VapB16 (58 aa).

In terms of biological role, putative antitoxin component of a possible type II toxin-antitoxin (TA) system. The cognate toxin is VapC16. The sequence is that of Putative antitoxin VapB16 (vapB16) from Mycobacterium tuberculosis (strain ATCC 25618 / H37Rv).